A 491-amino-acid chain; its full sequence is Non-structural protein 1 (491 aa).

The tract at residues 1–81 (MATFKDACYH…CFLDEEPHLL (81 aa)) is RNA-binding. Positions 42–79 (CLDCCQYTNLTYCRGCALYHVCQWCSQYNRCFLDEEPH) are zinc-binding domain. An important for cytoskeleton localization region spans residues 82–176 (RMRTFKDVVT…ENQTPFQFIN (95 aa)). The interval 320–491 (NVHNCKWCQI…EYDLELSDVE (172 aa)) is interaction with host IRF3. The short motif at 485 to 488 (LELS) is the pLxIS motif element.

Belongs to the rotavirus NSP1 family. Interacts (via C-terminus) with host IRF3; this interaction leads to IRF3 degradation. Interacts with host IRF7; this interaction leads to IRF7 degradation. Interacts with host CUL1 and CUL3.

Its subcellular location is the host cytoplasm. It localises to the host cytoskeleton. Plays a role in the inhibition of host innate immunity by inducing the degradation of key host factors required to activate interferon production such as IRF3, IRF5 or IRF7. Associates with components of cullin RING ligases (CRLs) including CUL1 or CUL3, which are essential multisubunit ubiquitination complexes, to modulate their activities. The polypeptide is Non-structural protein 1 (Bos taurus (Bovine)).